The following is a 396-amino-acid chain: Ribosomal RNA large subunit methyltransferase I (396 aa).

In terms of domain architecture, PUA spans 2 to 79 (AIRIKLKPGR…REEEIDRAFF (78 aa)).

Belongs to the methyltransferase superfamily. RlmI family.

Its subcellular location is the cytoplasm. The catalysed reaction is cytidine(1962) in 23S rRNA + S-adenosyl-L-methionine = 5-methylcytidine(1962) in 23S rRNA + S-adenosyl-L-homocysteine + H(+). Functionally, specifically methylates the cytosine at position 1962 (m5C1962) of 23S rRNA. This is Ribosomal RNA large subunit methyltransferase I from Shewanella putrefaciens (strain CN-32 / ATCC BAA-453).